Here is a 366-residue protein sequence, read N- to C-terminus: Chorismate synthase (366 aa).

Residues R48 and R54 each contribute to the NADP(+) site. FMN contacts are provided by residues 125–127 (RSS), 238–239 (NA), G278, 293–297 (KPTSS), and R319.

It belongs to the chorismate synthase family. In terms of assembly, homotetramer. The cofactor is FMNH2.

The catalysed reaction is 5-O-(1-carboxyvinyl)-3-phosphoshikimate = chorismate + phosphate. The protein operates within metabolic intermediate biosynthesis; chorismate biosynthesis; chorismate from D-erythrose 4-phosphate and phosphoenolpyruvate: step 7/7. In terms of biological role, catalyzes the anti-1,4-elimination of the C-3 phosphate and the C-6 proR hydrogen from 5-enolpyruvylshikimate-3-phosphate (EPSP) to yield chorismate, which is the branch point compound that serves as the starting substrate for the three terminal pathways of aromatic amino acid biosynthesis. This reaction introduces a second double bond into the aromatic ring system. This chain is Chorismate synthase, found in Pseudoalteromonas atlantica (strain T6c / ATCC BAA-1087).